Here is a 396-residue protein sequence, read N- to C-terminus: uncharacterized protein (396 aa).

2 helical membrane-spanning segments follow: residues Leu-27–Leu-47 and Phe-69–Phe-89. The HXXXXD motif motif lies at His-117–Asp-122. The next 2 helical transmembrane spans lie at Trp-123 to Leu-143 and Leu-372 to Met-392.

It belongs to the 1-acyl-sn-glycerol-3-phosphate acyltransferase family.

The protein localises to the membrane. This is an uncharacterized protein from Saccharomyces cerevisiae (strain ATCC 204508 / S288c) (Baker's yeast).